The primary structure comprises 416 residues: POC1 centriolar protein homolog A (416 aa).

WD repeat units lie at residues 16–55, 58–97, 100–139, 142–181, 184–223, 226–265, and 268–307; these read GHRD…RAYR, GHKD…ESVL, AHTG…IICT, EHNN…LIHT, EPGG…LLQH, VHSA…LLYT, and GHQG…VDYS. The tract at residues 311–340 is disordered; it reads QQKRDHRTPSAQASGAAGDPESRSGQKTEV. Residues 380–412 are a coiled coil; that stretch reads QLDVLTQTVAILEQRLTLTEDKLKECLEQQHQA.

Belongs to the WD repeat POC1 family.

Functionally, may play an important role in centriole assembly and/or stability and ciliogenesis. The polypeptide is POC1 centriolar protein homolog A (Danio rerio (Zebrafish)).